We begin with the raw amino-acid sequence, 367 residues long: MSDILKVDAPELFLAVTQESKFPGHITVHRLKTFSKSCVLRADFEPNPFGMVFVQGAVVGSVPLSNHRKLSVEGCPNVIESSDLLKLFEKLRMHREIVNMHGQVMIGLKQALVDASGVVKAEYIRCSDVFLWSDFGGCLPLRLWSRYVFCTERFVDDPQLILDGREGEEINILRKEALELQKQVTEQKAVVAELRLQISKQQGASAGTTSSVETSLRQTVEYWKGETQKFKNAWEMIEKERLKLSAEKNRAEYEVNSLTSARNSLQFHLDQLKQQHADTVAQAKRDRESAEKTIDDLNDKLYHYSDRLPVFRNRVRDIRNKLTDQLYLYNRVDLQARNRGQALNREVRALIDAIERDYPYIVWGVMP.

Coiled coils occupy residues 165-202 and 235-308; these read REGEEINILRKEALELQKQVTEQKAVVAELRLQISKQQ and EMIE…SDRL.

Might be involved in virion assembly and vector-mediated transmission of the virus. The sequence is that of Protein P39 from Peanut clump virus (isolate 87/TGTA2) (PCV).